We begin with the raw amino-acid sequence, 415 residues long: Histidine--tRNA ligase (415 aa).

This sequence belongs to the class-II aminoacyl-tRNA synthetase family. In terms of assembly, homodimer.

It localises to the cytoplasm. It carries out the reaction tRNA(His) + L-histidine + ATP = L-histidyl-tRNA(His) + AMP + diphosphate + H(+). This is Histidine--tRNA ligase from Rickettsia canadensis (strain McKiel).